The following is a 242-amino-acid chain: Carbendazim hydrolyzing esterase (242 aa).

The active-site Acyl-ester intermediate is the serine 77.

The protein belongs to the AB hydrolase superfamily.

The protein localises to the secreted. The catalysed reaction is carbendazim + H2O = 2-aminobenzimidazole + methanol + CO2. The enzyme catalyses carbendazim + H2O = N-(1H-1,3-benzodiazol-2-yl)carbamate + methanol + H(+). It catalyses the reaction N-(1H-1,3-benzodiazol-2-yl)carbamate + H(+) = 2-aminobenzimidazole + CO2. In terms of biological role, catalyzes the hydrolysis of the fungicide carbendazim (methyl-1H-benzimidazol-2-ylcarbamate or MBC) to 2-aminobenzimidazole (2-AB). Following hydrolysis of the carbamate ester, the carbamate decarboxylates spontaneously. Can hydrolyze model carboxylesters such as methyl salicylate, alpha-naphthyl acetate and p-nitrophenyl acetate. In addition, shows substantial hydrolytic activity in vitro against widespread pollutants with carboxylester, carbamate and amide linkages, such as dimethyl phthalate, propanil and chlorpropham. The sequence is that of Carbendazim hydrolyzing esterase from Nocardioides sp. (strain SG-4G).